A 554-amino-acid polypeptide reads, in one-letter code: Peroxisomal membrane protein PEX29 (554 aa).

At 1 to 145 (MDSVTNFFWN…PFMIMDELIK (145 aa)) the chain is on the cytoplasmic side. 2 stretches are compositionally biased toward polar residues: residues 11–22 (DTYNAGTPTRST) and 43–53 (ISSGSRTSDPT). The segment at 11-73 (DTYNAGTPTR…PTSGGGFPST (63 aa)) is disordered. Residues 55-64 (GSLPSSSGQP) show a composition bias toward low complexity. A helical transmembrane segment spans residues 146 to 166 (ILNWTNPAYTVSIMFLYTLII). Residues 167-172 (LKPFQM) lie on the Peroxisomal side of the membrane. The helical transmembrane segment at 173–193 (LSSLPIFYLLFCVMVPQYLYI) threads the bilayer. Over 194–264 (HKPNPTSYLD…LQKFAFFTNE (71 aa)) the chain is Cytoplasmic. The chain crosses the membrane as a helical span at residues 265-285 (AISSFYFIVLLIIATLNFLYM). Residues 286-287 (DK) lie on the Peroxisomal side of the membrane. The helical transmembrane segment at 288–308 (FIKLIPMRPVLILLGWGFFIA) threads the bilayer. Residues 309-554 (SHPSNREYLL…ELTDTLNSTI (246 aa)) are Cytoplasmic-facing. The interval 500-532 (GVTKGSMSGGLTHSSDDDRADEESINGTIPNLN) is disordered.

The protein belongs to the PEX28-32 family. PEX29 subfamily.

The protein localises to the peroxisome membrane. Involved in the regulation of peroxisome number, size and distribution. The chain is Peroxisomal membrane protein PEX29 (PEX29) from Saccharomyces cerevisiae (strain ATCC 204508 / S288c) (Baker's yeast).